A 104-amino-acid polypeptide reads, in one-letter code: MVNVPKTRKTYCSNKCKKHTMHKVSQYKKGKERLSSLGRRRYDMKQKGFGGQTKPVFKKKAKTTKKIVLKLECTKCKKKRFQTMKRCKTFEMGADKKKKGGAVY.

This sequence belongs to the eukaryotic ribosomal protein eL42 family. In terms of assembly, component of the large ribosomal subunit. Mature ribosomes consist of a small (40S) and a large (60S) subunit. The 40S subunit contains about 32 different proteins and 1 molecule of RNA (18S). The 60S subunit contains about 42 different proteins and 3 molecules of RNA (28S, 5.8S and 5S).

It localises to the cytoplasm. Component of the ribosome, a large ribonucleoprotein complex responsible for the synthesis of proteins in the cell. The small ribosomal subunit (SSU) binds messenger RNAs (mRNAs) and translates the encoded message by selecting cognate aminoacyl-transfer RNA (tRNA) molecules. The large subunit (LSU) contains the ribosomal catalytic site termed the peptidyl transferase center (PTC), which catalyzes the formation of peptide bonds, thereby polymerizing the amino acids delivered by tRNAs into a polypeptide chain. The nascent polypeptides leave the ribosome through a tunnel in the LSU and interact with protein factors that function in enzymatic processing, targeting, and the membrane insertion of nascent chains at the exit of the ribosomal tunnel. The protein is Large ribosomal subunit protein eL42 of Plasmodium falciparum (isolate 3D7).